Reading from the N-terminus, the 83-residue chain is Cobrotoxin (83 aa).

Positions 1–21 (MKTLLLTLLVVTIVCLDLGYT) are cleaved as a signal peptide. 4 cysteine pairs are disulfide-bonded: Cys24-Cys45, Cys38-Cys62, Cys64-Cys75, and Cys76-Cys81.

Belongs to the three-finger toxin family. Short-chain subfamily. Type I alpha-neurotoxin sub-subfamily. As to expression, expressed by the venom gland.

It localises to the secreted. Functionally, binds to muscle nicotinic acetylcholine receptor (nAChR) and inhibit acetylcholine from binding to the receptor, thereby impairing neuromuscular transmission. Has a higher toxicity than cobrotoxin-b. In vivo, when tested on rat arthritis models, shows anti-inflammation and immunosuppression effects. This Naja atra (Chinese cobra) protein is Cobrotoxin.